Here is a 645-residue protein sequence, read N- to C-terminus: Rho GTPase-activating protein 25 (645 aa).

The PH domain occupies 46–151 (RPIKMGWLKK…WVKFLRRVAG (106 aa)). The region spanning 159–353 (QRLDETVAYE…MMIRDHEVLF (195 aa)) is the Rho-GAP domain. Disordered stretches follow at residues 355–444 (KSKD…QTLP) and 469–550 (FWSP…EEEI). Phosphoserine occurs at positions 362 and 395. The span at 393–409 (TDSFSSMTSDSDTTSPT) shows a compositional bias: low complexity. A Phosphothreonine modification is found at threonine 406. The segment covering 420–431 (DSSKVPREKPGD) has biased composition (basic and acidic residues). The segment covering 487 to 504 (SQDLRQLSDSQRTSTYDN) has biased composition (polar residues). Serine 536 bears the Phosphoserine mark. The stretch at 541–644 (GKKNSGEEEI…VKSMKEPKTE (104 aa)) forms a coiled coil.

In terms of biological role, GTPase activator for the Rho-type GTPases by converting them to an inactive GDP-bound state. This chain is Rho GTPase-activating protein 25 (ARHGAP25), found in Homo sapiens (Human).